A 182-amino-acid polypeptide reads, in one-letter code: Peptidyl-tRNA hydrolase (182 aa).

Tyr14 provides a ligand contact to tRNA. His19 serves as the catalytic Proton acceptor. Residues Phe64, Asn66, and Asn112 each coordinate tRNA.

This sequence belongs to the PTH family. As to quaternary structure, monomer.

The protein resides in the cytoplasm. It carries out the reaction an N-acyl-L-alpha-aminoacyl-tRNA + H2O = an N-acyl-L-amino acid + a tRNA + H(+). In terms of biological role, hydrolyzes ribosome-free peptidyl-tRNAs (with 1 or more amino acids incorporated), which drop off the ribosome during protein synthesis, or as a result of ribosome stalling. Its function is as follows. Catalyzes the release of premature peptidyl moieties from peptidyl-tRNA molecules trapped in stalled 50S ribosomal subunits, and thus maintains levels of free tRNAs and 50S ribosomes. The protein is Peptidyl-tRNA hydrolase of Wolbachia sp. subsp. Drosophila simulans (strain wRi).